Consider the following 105-residue polypeptide: uncharacterized protein (105 aa).

The protein localises to the mitochondrion. This is an uncharacterized protein from Paramecium tetraurelia.